A 426-amino-acid chain; its full sequence is Histidine--tRNA ligase (426 aa).

The protein belongs to the class-II aminoacyl-tRNA synthetase family. In terms of assembly, homodimer.

The protein resides in the cytoplasm. The enzyme catalyses tRNA(His) + L-histidine + ATP = L-histidyl-tRNA(His) + AMP + diphosphate + H(+). The chain is Histidine--tRNA ligase from Streptococcus sanguinis (strain SK36).